A 187-amino-acid chain; its full sequence is UPF0301 protein YqgE (187 aa).

The protein belongs to the UPF0301 (AlgH) family.

In Salmonella paratyphi B (strain ATCC BAA-1250 / SPB7), this protein is UPF0301 protein YqgE.